Here is a 668-residue protein sequence, read N- to C-terminus: SH2 domain-containing protein B (668 aa).

The tract at residues 373-411 (SVSGSEESYQQCNSHPQTSRQFENGNGMRLHEEDNSSID) is disordered. The span at 374-396 (VSGSEESYQQCNSHPQTSRQFEN) shows a compositional bias: polar residues. The SH2 domain occupies 574 to 642 (WIEGFITKEE…DNICESSERY (69 aa)).

Post-translationally, phosphorylated on tyrosine residues. In terms of tissue distribution, expressed in roots, leaves, stems and flowers.

The sequence is that of SH2 domain-containing protein B from Arabidopsis thaliana (Mouse-ear cress).